A 156-amino-acid chain; its full sequence is Cyanate hydratase (156 aa).

Residues Arg-96, Glu-99, and Ser-122 contribute to the active site.

It belongs to the cyanase family.

The catalysed reaction is cyanate + hydrogencarbonate + 3 H(+) = NH4(+) + 2 CO2. Catalyzes the reaction of cyanate with bicarbonate to produce ammonia and carbon dioxide. This Burkholderia ambifaria (strain MC40-6) protein is Cyanate hydratase.